Reading from the N-terminus, the 450-residue chain is Glutathione reductase (450 aa).

FAD-binding residues include Ser-14, Gly-15, Glu-34, Thr-41, Cys-42, and Lys-50. Position 14 (Ser-14) interacts with glutathione. Cys-42 and Cys-47 are disulfide-bonded. Tyr-99 contributes to the glutathione binding site. Position 115 (Ala-115) interacts with FAD. NADP(+) contacts are provided by Ala-175, Ile-178, Glu-181, Arg-198, Arg-204, and Gly-262. Asp-303 contacts FAD. Glu-309 contributes to the NADP(+) binding site. Thr-311 contacts FAD. Position 319 (Arg-319) interacts with glutathione. An NADP(+)-binding site is contributed by Val-342. Residue His-439 coordinates FAD. Residue His-439 is the Proton acceptor of the active site.

The protein belongs to the class-I pyridine nucleotide-disulfide oxidoreductase family. In terms of assembly, homodimer. Requires FAD as cofactor.

It is found in the cytoplasm. It carries out the reaction 2 glutathione + NADP(+) = glutathione disulfide + NADPH + H(+). Its function is as follows. Catalyzes the reduction of glutathione disulfide (GSSG) to reduced glutathione (GSH). Constitutes the major mechanism to maintain a high GSH:GSSG ratio in the cytosol. The protein is Glutathione reductase (gor) of Escherichia coli (strain K12).